Reading from the N-terminus, the 228-residue chain is 2,3-bisphosphoglycerate-dependent phosphoglycerate mutase (228 aa).

Residues 8 to 15 (RHGQSQWN), 21 to 22 (TG), R60, 87 to 90 (ERHY), K98, 114 to 115 (RR), and 180 to 181 (GN) each bind substrate. H9 functions as the Tele-phosphohistidine intermediate in the catalytic mechanism. The active-site Proton donor/acceptor is E87.

It belongs to the phosphoglycerate mutase family. BPG-dependent PGAM subfamily. As to quaternary structure, homodimer.

The enzyme catalyses (2R)-2-phosphoglycerate = (2R)-3-phosphoglycerate. It functions in the pathway carbohydrate degradation; glycolysis; pyruvate from D-glyceraldehyde 3-phosphate: step 3/5. Catalyzes the interconversion of 2-phosphoglycerate and 3-phosphoglycerate. The polypeptide is 2,3-bisphosphoglycerate-dependent phosphoglycerate mutase (Erythrobacter litoralis (strain HTCC2594)).